The sequence spans 142 residues: MLTSEQIMGLLPHRYPFALVDRVVLHEPGQRAVAIKNVTLNEPQFQGHFPGRPLMPGVLIVEAMAQVGGLIVAQMPDLPKGLFVFAGIDAVRFRRPVVPGDQLTISCELLSLKRQRFGKVRGEARVEGQLVCSGELMFSLVD.

H48 is an active-site residue.

It belongs to the thioester dehydratase family. FabZ subfamily.

Its subcellular location is the cytoplasm. The enzyme catalyses a (3R)-hydroxyacyl-[ACP] = a (2E)-enoyl-[ACP] + H2O. In terms of biological role, involved in unsaturated fatty acids biosynthesis. Catalyzes the dehydration of short chain beta-hydroxyacyl-ACPs and long chain saturated and unsaturated beta-hydroxyacyl-ACPs. The chain is 3-hydroxyacyl-[acyl-carrier-protein] dehydratase FabZ from Prochlorococcus marinus (strain MIT 9313).